The sequence spans 208 residues: MTTEIHSNPANRPNRIASVERNTAETQVSVTVNLDGTGQGKIDTGVPFLDHMLDQIKRHGLFDLDITCKGDTYIDDHHSIEDTGITLGQAFAKALGDKKGIRRYGHFYAPLDESLTRAVVDISGRPGLHMDIPFTRSHVGNFDVDLFSEFFFGFVNHAWMTVHLDNLKGKNSHHQIECTFKAFARALRMACEYDERALNTLPSTKEAL.

Belongs to the imidazoleglycerol-phosphate dehydratase family.

It is found in the cytoplasm. It catalyses the reaction D-erythro-1-(imidazol-4-yl)glycerol 3-phosphate = 3-(imidazol-4-yl)-2-oxopropyl phosphate + H2O. It participates in amino-acid biosynthesis; L-histidine biosynthesis; L-histidine from 5-phospho-alpha-D-ribose 1-diphosphate: step 6/9. The chain is Imidazoleglycerol-phosphate dehydratase from Psychrobacter sp. (strain PRwf-1).